The chain runs to 426 residues: Cytochrome c biogenesis protein Ccs1 (426 aa).

Helical transmembrane passes span 11-31, 70-90, and 153-173; these read LKFAIALLLLISITITFGSII, NFWFISLLLSLGISLIACTFF, and IAPVFVHLSIILILLGSIFAS.

It belongs to the Ccs1/CcsB family. In terms of assembly, may interact with CcsA.

The protein resides in the plastid. Its subcellular location is the chloroplast thylakoid membrane. Functionally, required during biogenesis of c-type cytochromes (cytochrome c6 and cytochrome f) at the step of heme attachment. The sequence is that of Cytochrome c biogenesis protein Ccs1 from Heterosigma akashiwo (strain CCMP452 / OLISTH).